A 380-amino-acid polypeptide reads, in one-letter code: Alcohol dehydrogenase 2 (380 aa).

Zn(2+)-binding residues include Cys48, Thr50, His70, Cys100, Cys103, Cys106, Cys114, and Cys178. An alcohol-binding residues include Thr50 and His70. Residue Thr50 participates in NAD(+) binding. Residues 203 to 208 (GLGAVG), Asp227, Arg232, Thr273, Val296, 296 to 298 (VGV), Phe323, and Arg373 each bind NAD(+).

It belongs to the zinc-containing alcohol dehydrogenase family. As to quaternary structure, homodimer. Homotetramer. The cofactor is Zn(2+).

It localises to the cytoplasm. The enzyme catalyses a primary alcohol + NAD(+) = an aldehyde + NADH + H(+). It catalyses the reaction a secondary alcohol + NAD(+) = a ketone + NADH + H(+). The chain is Alcohol dehydrogenase 2 (ADH2) from Solanum tuberosum (Potato).